Consider the following 185-residue polypeptide: Elongation factor P (185 aa).

The protein belongs to the elongation factor P family.

The protein resides in the cytoplasm. The protein operates within protein biosynthesis; polypeptide chain elongation. In terms of biological role, involved in peptide bond synthesis. Stimulates efficient translation and peptide-bond synthesis on native or reconstituted 70S ribosomes in vitro. Probably functions indirectly by altering the affinity of the ribosome for aminoacyl-tRNA, thus increasing their reactivity as acceptors for peptidyl transferase. This is Elongation factor P from Streptococcus uberis (strain ATCC BAA-854 / 0140J).